Here is a 440-residue protein sequence, read N- to C-terminus: MKERILQEIKTRVNRKSWELWFSSFDVKSIEGNKVVFSVGNLFIKEWLEKKYYSVLSKAVKVVLGNDATFEITYEAFEPHSSYSEPLVKKRAVLLTPLNPDYTFENFVVGPGNSFAYHAALEVAKHPGRYNPLFIYGGVGLGKTHLLQSIGNYVVQNEPDLRVMYITSEKFLNDLVDSMKEGKLNEFREKYRKKVDILLIDDVQFLIGKTGVQTELFHTFNELHDSGKQIVICSDREPQKLSEFQDRLVSRFQMGLVAKLEPPDEETRKSIARKMLEIEHGELPEEVLNFVAENVDDNLRRLRGAIIKLLVYKETTGKEVDLKEAILLLKDFIKPNRVKAMDPIDELIEIVAKVTGVPREEILSNSRNVKALTARRIGMYVAKNYLKSSLRTIAEKFNRSHPVVVDSVKKVKDSLLKGNKQLKALIDEVIGEISRRALSG.

Residues methionine 1–threonine 69 are domain I, interacts with DnaA modulators. Residues threonine 69–threonine 96 form a domain II region. Residues proline 97–lysine 313 form a domain III, AAA+ region region. ADP is bound by residues valine 108, asparagine 113, glycine 140, leucine 141, glycine 142, lysine 143, threonine 144, histidine 145, and arginine 300. An ATP-binding site is contributed by glycine 140. Positions 142, 143, and 144 each coordinate ATP. Position 144 (threonine 144) interacts with Mg(2+). Positions glutamate 314–glycine 440 are domain IV, binds dsDNA.

It belongs to the DnaA family. In terms of assembly, oligomerizes as a right-handed, spiral filament on DNA at oriC.

Its subcellular location is the cytoplasm. Its function is as follows. Plays an essential role in the initiation and regulation of chromosomal replication. ATP-DnaA binds to the origin of replication (oriC) to initiate formation of the DNA replication initiation complex once per cell cycle. Binds the DnaA box (a 9 base pair repeat at the origin) and separates the double-stranded (ds)DNA. Forms a right-handed helical filament on oriC DNA; dsDNA binds to the exterior of the filament while single-stranded (ss)DNA is stabiized in the filament's interior. The ATP-DnaA-oriC complex binds and stabilizes one strand of the AT-rich DNA unwinding element (DUE), permitting loading of DNA polymerase. After initiation quickly degrades to an ADP-DnaA complex that is not apt for DNA replication. Binds acidic phospholipids. Functionally, the DnaA box consensus is 5'-[ATC][AT]AC[CT]TACCA[CT][CTA]-3' in this bacterium. Mutagenesis of residues that line the central pore blocks dsDNA separation. The chain is Chromosomal replication initiator protein DnaA from Thermotoga maritima (strain ATCC 43589 / DSM 3109 / JCM 10099 / NBRC 100826 / MSB8).